A 200-amino-acid polypeptide reads, in one-letter code: 3-isopropylmalate dehydratase small subunit (200 aa).

The protein belongs to the LeuD family. LeuD type 1 subfamily. In terms of assembly, heterodimer of LeuC and LeuD.

It catalyses the reaction (2R,3S)-3-isopropylmalate = (2S)-2-isopropylmalate. Its pathway is amino-acid biosynthesis; L-leucine biosynthesis; L-leucine from 3-methyl-2-oxobutanoate: step 2/4. Catalyzes the isomerization between 2-isopropylmalate and 3-isopropylmalate, via the formation of 2-isopropylmaleate. This is 3-isopropylmalate dehydratase small subunit from Aliivibrio salmonicida (strain LFI1238) (Vibrio salmonicida (strain LFI1238)).